We begin with the raw amino-acid sequence, 3380 residues long: MGTPPHIWFLLILAISSGGLSAAVGGCNHQCTPQSSVFQYQKGQTYTYSFEGTTLTSLPGTQGEPVRLKLKATADLSVADDCNKVLRLRGVTVSGPDSKNYANLKDLEAHPVLANFKGSSINKQLCSEDGDNQSSLNIKRAILSLLQTPNTKSSTASEVDVFGICPTNVRHSQRGDVTVISKTRNLNRYASRENLIQETLSTRFTGQSDLHATPFLDADLHVEQQIKGGLIVSATSRESYLFRPFSNQGNGAKTIVETKLTLTSQNAQPAPPLASFTVPKSIVFEAPHALASVPGGSSAITAALHAAESSTKDGVTVDAAEKFRTLVSVLRQSSTTDILKVYNDVKAGAGFSNKHSARNLLLDALFRTSTGDAVEVIARLLKTKEITANHWYLSLAFIQHASLKSVVSISSLLDQKNLPTEAFLGIGSFIGRYCREHNCENVAEFDEVLNKFSKHLSGSTTSKAGENRAIAALKALGNIRHLNNALGEKVKQLALDKSLPPRVRVAALEVIQSDPCRKNIKQAALQILRDQVEDSELRIKAYLAVVECPCDNVVKTISNLLENEPIIQVGSFVVSHLKNLQASTDPSKAEAKEKLGQLKPKKIFSSDIRKYSQNYELSYAIDAINAGASVESNVIFSQSSYLPRSVSLNLTADVFGHSYNVFEIAARTENLDHIIESFLGPKGYIETEDDDKFVDEVEEKTKSLYNRITERFEKTFRQKRSVSKDAVDNIRQQAYKSLLPSQRDRSLDVDLSLKTFGSELAWFNYDGKHEQKSSERVVDEIFDAIDEGLKKSKKFNYDFEPHFTFLDSELSYPTNLGFPLKLAIDGSIAARLKLNGEVDVRSILRQPENAAFRLEFVPSAAVELTGKLLVDAYVVEGGLKLDYNVHSSTGINVAVHNLNDLGIDIKVGLPVKKQDIIDVKTDVLTTVKERGHPETSTPLHFNLKGNDYKQYRGCFDQLSPVSGLTFCGNVSVPWVSPTQAAAFYPLNGPSHLSVSIEADDVSEYHFRAEIKKDESAFKSAAVLFDTPGSSADRKVLLLVEKKEKPHQGITAHLKSGWKEIVAEGLLIDDNNEKSVSAKLVIESDEYSIKGGVKISGNPSRQVYKPILEYKAPAKDSGAKVKKSHKTSEGITVDGAVVVERTSDKGKYTFQDLSLKTPKGTFVINGQLDIVPRNYAFDLKLSVDKNELLLNGHLNYAEPKSIDVALEVTSPQFPDYGSGFQLINKRGDDYSDTKIILACGRDLKSDGSRLILEHFIKGKYETPDTFNLETKGEVLGTGHKIFGKFDIDSKPKHLEYDLKLGFDENEVTSDLVAKRDIKSPDDYELKFSAKILDNSIRIESSREVKPKDDSAFLNTLVVLSGKKYEFQVDVKLAAEDEYHTSLKAESNLKIEGKTSVRLITDFTTDAQTVNGHVKVSNEGEDFFELIYKLNRGSGNPSGNAKLFVKNYLDGAATFKYNNGVGSGTLQIDVLKLHRKIKATGDLTLSGSQRSAAIDLYWDADRDQSKQLLFKTENDVKEKSIDSKNTLKILDKLTTLNFKGSLSGAIDDGEVEGQGELILPVGTYLGVKFGRALHLTQADTKVGLHLQAEGRESASSTQPVWKSDFLLESALTRDSFVGEAKLLFETKGKDDLKLFLSGKSLPQGEKKLISGQFSGQGSLIGGRTSVIKLNSEIDETFIAYNLNSECNQGYRANIVGKINRGYSPVAVKQIENTLELLLPFDKLKQLKHTIIGTFSSQPESTPEFTVSNVIIWNNENTLKLTGEAAGDEKEGRTKWDLILPKEEPRTLETTWSNAGDNKKAGSLSFKWGGNKEAKVSTDIEFTSDNQPQILHLKATSPTEKFGIFDLALSLKKNADPADKIDFELTVTADQKKTDVKGSLGLAPGVPIIDVVAVQPSGTSKVFVDFLRKSDSELHGAIELQWVAFGGGHLTANGDIKLDIDDFYLKLDVDSPKFNFNKWHLEAGQRAAKGSKRIVFTAKSAEKVLFSGSTNFHSKAENNKISYSGNGQVRIGDKAHAFNFRSSRQNLIQDANKEIGVEYNLDFKIAGHGSLHNILKVTNKELHALGKQCSEGKPNCAVVEIKSKVSAADAKETTHDLVFLVDLKSVGVDTGVAFTAETVRRGFWLIDEQASLTLSHNGETTYKYKGYLKESGSGFTLTLPSRVIAAEVKLSSDVKPNHSKQQISASVWLDKTRLPNSFSSVSILLEEIEDKNTDKYVSQLRFTHPNLEKDLTVKGYVQIGLENKLFDSNLEIDIFKQKNQKISISSTVVEQKQNDVVKYLSTLDVKSKGHELDVTGRGEATVKPSLIALQSVLKYKKDKRIKEFKNFQFEVSTEKLLVHVKVPNHHLLHIDANTKINDKHASGDASVHIIGLPTSVIHIEGENKGFPVVKGTISSEGTPNKLELIADLSDGLLVEADFISESGKKELFYTFLSGKKDSRKPEFRWSVENIQSALEPHKNDIQEVLNKLKEISDEAGNEITKESSRLADSLKAGLPNFRRFVNTYETQLKALKEEIANDKVLKEISENWKEVIGDAAEVVSTLVNGILVTIDALLKTLNELAESVLDALKKSLPALKDSYKQAVDAIVGIAKSLTQSLVNILSSAAEILKKHEADIKEYLSVLADLANDVGKFVTKITGVIYEGVVEFSKPIKEKLDGLKFGVAIEFGKVVEQLQNLIVPQELLAFAQEIVSELKETTLTPEIQDLLQAIEKYLEKVSKKKDADVEKELKLIFEKAIDAVESVINFVVSEITGGDHTKDLYDINIPTVLPSFIQLPRVFSVRFSPLIYLVSNGVPCLSDLLASYRPSLRFDNIIPPYDATAILLNSHHFFTFDRRHLTFKGICSYILAQDVQDGNFTIIANIEGGSLKSIIVSDQATTFELASDKSLLVNGRPTEYPADEGEFHAWREYNRVGIQTKAGVKVTCETSIELCTFEINGFYFGKTRGLLGTINNEPWDDFTKPDGQVASKANEFGNAWKVDAQCANVDGVDHHEHSIKVEECEEVFSKASLLSPCSLFLDPAPYLEACSHIAHEATTKEEKQLAACRTAAAYVQACSVENVFVSVPPHCVHCSVNGDAAIDIGQSFSVKVPQKSADILIVLEQVTGNAETVKDFVSPIVSQLTQELSSRGISDVWISLLGYGAPGQEYPHLYTSSGGKLSYDGKQKNIQFGERKVLGPFPFDNFTESIDWLDEFTDQAFHLITTADTILDYPFRPGAAKSIIYVLDTSCETTLFLKHLPVKALKLKDAIGSPGIVLHLVTNVDSVQSKNIVGFDTNHAYYNQEGKKRVVSEVTGNEKAALKISETACGQIALATSGTVFNKNNLKQTKKFVAQHIADSLTNVELTQDCKCLPVEGIHTRAVCAVTGAREKEHLSVKGVKGTKGVKG.

A signal peptide spans 1 to 21; that stretch reads MGTPPHIWFLLILAISSGGLS. One can recognise a Vitellogenin domain in the interval 40 to 646; that stretch reads YQKGQTYTYS…SQSSYLPRSV (607 aa). Asn-132, Asn-649, Asn-969, Asn-2174, Asn-2851, and Asn-3177 each carry an N-linked (GlcNAc...) asparagine glycan. The 165-residue stretch at 2815–2979 folds into the VWFD domain; that stretch reads ATAILLNSHH…NAWKVDAQCA (165 aa). Cys-2839 and Cys-2978 are disulfide-bonded.

In terms of processing, cleaved into 2 chains by furin protease. However, prevention of cleavage does not impair its function. Post-translationally, N-glycosylated. Present in brain, hemolymph, fat body and eyes.

Its subcellular location is the secreted. Its function is as follows. Constitutes the major component of lipophorin, which mediates transport for various types of lipids in hemolymph. Acts by forming lipoprotein particles that bind lipoproteins and lipids. May be required for morphogens wingless (wg) and hedgehog (hh) function, possibly by acting as vehicles for the movement of wg and hh. The sequence is that of Apolipophorins from Locusta migratoria (Migratory locust).